Here is a 268-residue protein sequence, read N- to C-terminus: Imidazole glycerol phosphate synthase subunit HisF (268 aa).

Residues aspartate 12 and aspartate 131 contribute to the active site.

This sequence belongs to the HisA/HisF family. As to quaternary structure, heterodimer of HisH and HisF.

Its subcellular location is the cytoplasm. It catalyses the reaction 5-[(5-phospho-1-deoxy-D-ribulos-1-ylimino)methylamino]-1-(5-phospho-beta-D-ribosyl)imidazole-4-carboxamide + L-glutamine = D-erythro-1-(imidazol-4-yl)glycerol 3-phosphate + 5-amino-1-(5-phospho-beta-D-ribosyl)imidazole-4-carboxamide + L-glutamate + H(+). It participates in amino-acid biosynthesis; L-histidine biosynthesis; L-histidine from 5-phospho-alpha-D-ribose 1-diphosphate: step 5/9. IGPS catalyzes the conversion of PRFAR and glutamine to IGP, AICAR and glutamate. The HisF subunit catalyzes the cyclization activity that produces IGP and AICAR from PRFAR using the ammonia provided by the HisH subunit. The polypeptide is Imidazole glycerol phosphate synthase subunit HisF (Salinibacter ruber (strain DSM 13855 / M31)).